A 271-amino-acid polypeptide reads, in one-letter code: Calretinin (271 aa).

6 EF-hand domains span residues 16 to 51, 63 to 98, 107 to 142, 151 to 186, 195 to 230, and 235 to 270; these read LTAS…LEKA, NFGE…EENF, GSSA…LLKK, KLQE…QENF, LTSE…LYEK, and MNIQ…SEPP. Positions 29, 31, 33, 35, 40, 76, 78, 80, 82, 87, 120, 122, 124, 126, 131, 164, 166, 168, 170, 175, 208, 210, 212, 214, and 219 each coordinate Ca(2+). Y214 carries the post-translational modification Phosphotyrosine.

Belongs to the calbindin family.

It is found in the synapse. It localises to the cell projection. The protein resides in the dendrite. In terms of biological role, calcium-binding protein involved in calcium homeostasis and signal transduction. It plays a critical role in buffering intracellular calcium levels and modulating calcium-dependent signaling pathways. Predominantly expressed in specific neuronal populations, influences synaptic plasticity and neuronal excitability, contributing to learning and memory. During embryonic development, it facilitates neuronal differentiation and maturation. This is Calretinin (Calb2) from Rattus norvegicus (Rat).